Here is a 199-residue protein sequence, read N- to C-terminus: Carbon disulfide hydrolase (199 aa).

Positions 36, 91, and 94 each coordinate Zn(2+).

It belongs to the beta-class carbonic anhydrase family. Exists as both octamers and hexadecamers in solution. The hexadecameric homooligomer may form a catenane, through interactions of two interlocked octameric rings. Requires Zn(2+) as cofactor.

The enzyme catalyses carbon disulfide + 2 H2O = 2 hydrogen sulfide + CO2 + 2 H(+). It functions in the pathway sulfur metabolism; hydrogen sulfide biosynthesis. In terms of biological role, catalyzes the conversion of carbon disulfide into hydrogen sulfide and carbon dioxide, with carbonyl sulfide as an intermediate. Likely plays a key role in sulfur metabolism that allows A.thiooxidans G8 to grow on carbon disulfide as the main carbon and energy source. Does not show carbonic anhydrase activity (hydration of CO(2) to carbonate). The sequence is that of Carbon disulfide hydrolase from Acidithiobacillus thiooxidans (Thiobacillus thiooxidans).